The following is a 175-amino-acid chain: Nucleoside triphosphate/diphosphate phosphatase (175 aa).

Arg23 functions as the Proton donor in the catalytic mechanism. Asn87, Asp103, Asp105, Asp107, Asp120, and Glu123 together coordinate Mg(2+).

Belongs to the Ntdp family. Requires Mg(2+) as cofactor.

The enzyme catalyses a ribonucleoside 5'-triphosphate + H2O = a ribonucleoside 5'-diphosphate + phosphate + H(+). It carries out the reaction a ribonucleoside 5'-diphosphate + H2O = a ribonucleoside 5'-phosphate + phosphate + H(+). Its function is as follows. Has nucleoside phosphatase activity towards nucleoside triphosphates and nucleoside diphosphates. This is Nucleoside triphosphate/diphosphate phosphatase from Halalkalibacterium halodurans (strain ATCC BAA-125 / DSM 18197 / FERM 7344 / JCM 9153 / C-125) (Bacillus halodurans).